Reading from the N-terminus, the 177-residue chain is Large ribosomal subunit protein uL6 (177 aa).

It belongs to the universal ribosomal protein uL6 family. As to quaternary structure, part of the 50S ribosomal subunit.

Its function is as follows. This protein binds to the 23S rRNA, and is important in its secondary structure. It is located near the subunit interface in the base of the L7/L12 stalk, and near the tRNA binding site of the peptidyltransferase center. In Parvibaculum lavamentivorans (strain DS-1 / DSM 13023 / NCIMB 13966), this protein is Large ribosomal subunit protein uL6.